The chain runs to 102 residues: Small ribosomal subunit protein uS10 (102 aa).

The protein belongs to the universal ribosomal protein uS10 family. Part of the 30S ribosomal subunit.

Involved in the binding of tRNA to the ribosomes. The sequence is that of Small ribosomal subunit protein uS10 from Staphylococcus saprophyticus subsp. saprophyticus (strain ATCC 15305 / DSM 20229 / NCIMB 8711 / NCTC 7292 / S-41).